A 547-amino-acid chain; its full sequence is Apolipoprotein N-acyltransferase (547 aa).

Transmembrane regions (helical) follow at residues 31-51, 71-91, 106-126, 180-200, and 210-230; these read ILSG…ALIF, FWAG…WIAY, LALL…VAAG, LVGF…MGYV, and ALSH…WGFW. In terms of domain architecture, CN hydrolase spans 247 to 515; sequence VQANIGNLEK…KYLKNAPLTF (269 aa). Residue glutamate 294 is the Proton acceptor of the active site. Residue lysine 364 is part of the active site. Cysteine 418 serves as the catalytic Nucleophile. A helical transmembrane segment spans residues 515–535; sequence FFVQWGHWDWIVILLVLGAVI.

It belongs to the CN hydrolase family. Apolipoprotein N-acyltransferase subfamily.

The protein resides in the cell inner membrane. The enzyme catalyses N-terminal S-1,2-diacyl-sn-glyceryl-L-cysteinyl-[lipoprotein] + a glycerophospholipid = N-acyl-S-1,2-diacyl-sn-glyceryl-L-cysteinyl-[lipoprotein] + a 2-acyl-sn-glycero-3-phospholipid + H(+). It functions in the pathway protein modification; lipoprotein biosynthesis (N-acyl transfer). Functionally, catalyzes the phospholipid dependent N-acylation of the N-terminal cysteine of apolipoprotein, the last step in lipoprotein maturation. The protein is Apolipoprotein N-acyltransferase of Bdellovibrio bacteriovorus (strain ATCC 15356 / DSM 50701 / NCIMB 9529 / HD100).